The following is a 79-amino-acid chain: Potassium channel toxin Hge-beta-KTx (79 aa).

The first 21 residues, 1–21 (MAKSFFAAFLIIMLISSLVDG), serve as a signal peptide directing secretion. A BetaSPN-type CS-alpha/beta domain is found at 48 to 79 (EYMCPVVSSFCKQHCARLGKSGQCDLLECICS). Intrachain disulfides connect Cys-51–Cys-71, Cys-58–Cys-76, and Cys-62–Cys-78.

As to expression, expressed by the venom gland.

It localises to the secreted. In terms of biological role, the full peptide presents antibacterial and cytotoxic activities. The synthetic C-terminus (AA 33-76) inhibits voltage-gated potassium channels Kv1.1/KCNA1, Kv1.2/KCNA2, and Kv1.3/KCNA3. In Hoffmannihadrurus gertschi (Scorpion), this protein is Potassium channel toxin Hge-beta-KTx.